The following is a 416-amino-acid chain: Squamosa promoter-binding-like protein 8 (416 aa).

The tract at residues 11–51 is disordered; it reads SSCDDFGYNATPPPPPSLLPIMDQDGGGGSIQRDHHQHHNH. The SBP-type zinc-finger motif lies at 182–260; the sequence is PPRCQAEGCK…ADHNRRRRKS (79 aa). Residues Cys-185, Cys-190, Cys-207, His-210, Cys-227, Cys-230, His-234, and Cys-246 each coordinate Zn(2+). Residues 243-259 carry the Bipartite nuclear localization signal motif; that stretch reads KKSCRKRLADHNRRRRK. Positions 250–299 are disordered; that stretch reads LADHNRRRRKSKPSDGEHSGEKRRAQANKSAATKDKAGSSSKNAGIGDGF. Basic and acidic residues predominate over residues 261–273; sequence KPSDGEHSGEKRR.

As to expression, expressed in stems, leaf sheaths, and young panicles. Weakly expressed in ligules, auricles, and leaf sheaths at the basal region.

It is found in the nucleus. Its function is as follows. Probable transcription factor that plays an important role in building the laminar joint between leaf blade and leaf sheath boundary, thereby controlling ligule and auricle development. The protein is Squamosa promoter-binding-like protein 8 (SPL8) of Oryza sativa subsp. japonica (Rice).